The primary structure comprises 408 residues: CinA-like protein (408 aa).

The protein belongs to the CinA family.

The chain is CinA-like protein from Thermotoga neapolitana (strain ATCC 49049 / DSM 4359 / NBRC 107923 / NS-E).